The following is a 247-amino-acid chain: Carboxy-S-adenosyl-L-methionine synthase (247 aa).

S-adenosyl-L-methionine is bound by residues Tyr-38, 63 to 65 (GCS), Asn-131, and Arg-198.

Belongs to the class I-like SAM-binding methyltransferase superfamily. Cx-SAM synthase family. In terms of assembly, homodimer.

It catalyses the reaction prephenate + S-adenosyl-L-methionine = carboxy-S-adenosyl-L-methionine + 3-phenylpyruvate + H2O. In terms of biological role, catalyzes the conversion of S-adenosyl-L-methionine (SAM) to carboxy-S-adenosyl-L-methionine (Cx-SAM). The chain is Carboxy-S-adenosyl-L-methionine synthase from Desulforapulum autotrophicum (strain ATCC 43914 / DSM 3382 / VKM B-1955 / HRM2) (Desulfobacterium autotrophicum).